The chain runs to 198 residues: Small ribosomal subunit protein eS1 (198 aa).

It belongs to the eukaryotic ribosomal protein eS1 family.

The polypeptide is Small ribosomal subunit protein eS1 (Methanosphaerula palustris (strain ATCC BAA-1556 / DSM 19958 / E1-9c)).